A 439-amino-acid polypeptide reads, in one-letter code: MLSLDQIPHHIRHGIVGSRLIQIRGRVTQVTGTLLKAVVPGVRIGELCYLRNPDNSLSLQAEVIGFAQHQALLIPLGEMYGISSNTEVSPTGTMHQVGVGEHLLGQVLDGLGQPFDGGHLPEPAAWYPVYQDAPAPMSRKLITTPLSLGIRVIDGLLTCGEGQRMGIFAAAGGGKSTLLASLIRSAEVDVTVLALIGERGREVREFIESDLGEEGLRKAVLVVATSDRPSMERAKAGFVATSIAEYFRDQGKRVLLLMDSVTRFARAQREIGLAAGEPPTRRGYPPSVFAALPRLMERAGQSSKGSITALYTVLVEGDDMTEPVADETRSILDGHIILSRKLAAANHYPAIDVLRSASRVMNQIVSKEHKTWAGDLRRLLAKYEEVELLLQIGEYQKGQDKEADQAIERMGAIRGWLCQGTHELSHFNETLNLLETLTQ.

172–177 contacts ATP; that stretch reads GGGKST.

It belongs to the ATPase alpha/beta chains family. T3SS ATPase subfamily. As to quaternary structure, the core secretion machinery of the T3SS is composed of approximately 20 different proteins, including cytoplasmic components, a base, an export apparatus and a needle. This subunit is part of the cytosolic complex. Forms homohexamers.

It localises to the cytoplasm. It catalyses the reaction ATP + H2O + cellular proteinSide 1 = ADP + phosphate + cellular proteinSide 2.. Functionally, ATPase component of the type III secretion system (T3SS), also called injectisome, which is used to inject bacterial effector proteins into eukaryotic host cells. Acts as a molecular motor to provide the energy that is required for the export of proteins. Required for type III secretion apparatus (T3SA) formation, proper protein secretion, host cell invasion and virulence. May play a critical role in T3SS substrate recognition, disassembly of the effector/chaperone complex and unfolding of the effector in an ATP-dependent manner prior to secretion. This chain is Type 3 secretion system ATPase, found in Yersinia pseudotuberculosis serotype I (strain IP32953).